We begin with the raw amino-acid sequence, 431 residues long: Isochorismate synthase MenF (431 aa).

The active-site Proton acceptor is Lys183. Catalysis depends on Glu233, which acts as the Proton donor. Mg(2+) is bound by residues Glu277 and Glu414.

The protein belongs to the isochorismate synthase family. Mg(2+) is required as a cofactor.

The enzyme catalyses chorismate = isochorismate. Its pathway is quinol/quinone metabolism; 1,4-dihydroxy-2-naphthoate biosynthesis; 1,4-dihydroxy-2-naphthoate from chorismate: step 1/7. The protein operates within quinol/quinone metabolism; menaquinone biosynthesis. Catalyzes the conversion of chorismate to isochorismate. The sequence is that of Isochorismate synthase MenF from Pasteurella multocida (strain Pm70).